Here is a 290-residue protein sequence, read N- to C-terminus: ATP synthase gamma chain (290 aa).

Belongs to the ATPase gamma chain family. In terms of assembly, F-type ATPases have 2 components, CF(1) - the catalytic core - and CF(0) - the membrane proton channel. CF(1) has five subunits: alpha(3), beta(3), gamma(1), delta(1), epsilon(1). CF(0) has four main subunits: a, b, b' and c.

The protein resides in the cellular chromatophore membrane. Produces ATP from ADP in the presence of a proton gradient across the membrane. The gamma chain is believed to be important in regulating ATPase activity and the flow of protons through the CF(0) complex. The protein is ATP synthase gamma chain of Rhodobacter capsulatus (Rhodopseudomonas capsulata).